We begin with the raw amino-acid sequence, 427 residues long: 3-phosphoshikimate 1-carboxyvinyltransferase (427 aa).

3-phosphoshikimate is bound by residues Lys-22, Ser-23, and Arg-27. Residue Lys-22 participates in phosphoenolpyruvate binding. Phosphoenolpyruvate-binding residues include Gly-96 and Arg-124. 3-phosphoshikimate-binding residues include Ser-169, Ser-170, Gln-171, Ser-197, Asp-313, Asn-336, and Lys-340. Gln-171 lines the phosphoenolpyruvate pocket. The active-site Proton acceptor is the Asp-313. Arg-344, Arg-386, and Lys-411 together coordinate phosphoenolpyruvate.

The protein belongs to the EPSP synthase family. In terms of assembly, monomer.

The protein resides in the cytoplasm. The enzyme catalyses 3-phosphoshikimate + phosphoenolpyruvate = 5-O-(1-carboxyvinyl)-3-phosphoshikimate + phosphate. The protein operates within metabolic intermediate biosynthesis; chorismate biosynthesis; chorismate from D-erythrose 4-phosphate and phosphoenolpyruvate: step 6/7. Functionally, catalyzes the transfer of the enolpyruvyl moiety of phosphoenolpyruvate (PEP) to the 5-hydroxyl of shikimate-3-phosphate (S3P) to produce enolpyruvyl shikimate-3-phosphate and inorganic phosphate. The chain is 3-phosphoshikimate 1-carboxyvinyltransferase from Salmonella typhimurium (strain LT2 / SGSC1412 / ATCC 700720).